A 242-amino-acid polypeptide reads, in one-letter code: ATP synthase subunit a (242 aa).

6 consecutive transmembrane segments (helical) span residues 29–49, 84–104, 114–134, 140–160, 181–201, and 206–226; these read SAVA…TAFV, FFPL…LGMV, IIVT…YGIY, FFSL…MVII, VAGH…TWLF, and IALV…QAYI.

The protein belongs to the ATPase A chain family. In terms of assembly, F-type ATPases have 2 components, CF(1) - the catalytic core - and CF(0) - the membrane proton channel. CF(1) has five subunits: alpha(3), beta(3), gamma(1), delta(1), epsilon(1). CF(0) has three main subunits: a(1), b(2) and c(9-12). The alpha and beta chains form an alternating ring which encloses part of the gamma chain. CF(1) is attached to CF(0) by a central stalk formed by the gamma and epsilon chains, while a peripheral stalk is formed by the delta and b chains.

Its subcellular location is the cell inner membrane. Its function is as follows. Key component of the proton channel; it plays a direct role in the translocation of protons across the membrane. In Orientia tsutsugamushi (strain Ikeda) (Rickettsia tsutsugamushi), this protein is ATP synthase subunit a.